Consider the following 405-residue polypeptide: Na(+)-translocating NADH-quinone reductase subunit F (405 aa).

A helical transmembrane segment spans residues 3–23 (IILGIVMFTVIVLVLALMILF). Residues 32-124 (GDITIKVNGE…DMDIEVPEEV (93 aa)) enclose the 2Fe-2S ferredoxin-type domain. [2Fe-2S] cluster contacts are provided by Cys67, Cys73, Cys76, and Cys108. The FAD-binding FR-type domain occupies 127-267 (VKKWECTVIS…SGPFGEFFAK (141 aa)).

Belongs to the NqrF family. Composed of six subunits; NqrA, NqrB, NqrC, NqrD, NqrE and NqrF. The cofactor is [2Fe-2S] cluster. It depends on FAD as a cofactor.

It localises to the cell inner membrane. It catalyses the reaction a ubiquinone + n Na(+)(in) + NADH + H(+) = a ubiquinol + n Na(+)(out) + NAD(+). Its function is as follows. NQR complex catalyzes the reduction of ubiquinone-1 to ubiquinol by two successive reactions, coupled with the transport of Na(+) ions from the cytoplasm to the periplasm. The first step is catalyzed by NqrF, which accepts electrons from NADH and reduces ubiquinone-1 to ubisemiquinone by a one-electron transfer pathway. This is Na(+)-translocating NADH-quinone reductase subunit F from Neisseria meningitidis serogroup C / serotype 2a (strain ATCC 700532 / DSM 15464 / FAM18).